A 316-amino-acid chain; its full sequence is MTKEFHHVTVLLHETVDMLDIKPNGIYVDATLGGSGHSAYLLSKLSEQGHLYCFDQDQKAIDNAQVTLKSYIDKGQVTFIKDNFRHLKARLTALGVDEIDGILYDLGVSSPQLDERERGFSYKQDAPLDMRMDRQSLLTAYEVVNTYPFNDLVKIFFKYGEDKFSKQIARKIEQARAIKPIETTTELAELIKAAKPAKELKKKGHPAKQIFQAIRIEVNDELGAADESIQDAMELLALDGRISVITFHSLEDRLTKQLFKEASTVDVPKGLPLIPEDMKPTFELVSRKPILPSHSELTANKRAHSAKLRVAKKIRK.

Residues 35-37, Asp55, Phe84, Asp105, and Gln112 each bind S-adenosyl-L-methionine; that span reads SGH.

This sequence belongs to the methyltransferase superfamily. RsmH family.

It is found in the cytoplasm. It catalyses the reaction cytidine(1402) in 16S rRNA + S-adenosyl-L-methionine = N(4)-methylcytidine(1402) in 16S rRNA + S-adenosyl-L-homocysteine + H(+). Specifically methylates the N4 position of cytidine in position 1402 (C1402) of 16S rRNA. This Streptococcus pyogenes serotype M4 (strain MGAS10750) protein is Ribosomal RNA small subunit methyltransferase H.